The chain runs to 167 residues: Small heat shock protein C1 (167 aa).

Positions 59-167 (PFYESNSIKS…EQDAKEIPIN (109 aa)) constitute a sHSP domain.

The protein belongs to the small heat shock protein (HSP20) family.

In Rickettsia bellii (strain RML369-C), this protein is Small heat shock protein C1 (hspC1).